Reading from the N-terminus, the 331-residue chain is Protein-methionine-sulfoxide reductase catalytic subunit MsrP (331 aa).

The tat-type signal signal peptide spans 1-54; that stretch reads MLIKTDRWLRGDDIPASEITPQHLFDQRRRLLAAAALGAAGAALSPWAARRAFA. Residues N86, 89 to 90, C144, S179, N227, R232, and 243 to 245 each bind Mo-molybdopterin; these read YE and SAK.

This sequence belongs to the MsrP family. Heterodimer of a catalytic subunit (MsrP) and a heme-binding subunit (MsrQ). It depends on Mo-molybdopterin as a cofactor. In terms of processing, predicted to be exported by the Tat system. The position of the signal peptide cleavage has not been experimentally proven.

It is found in the periplasm. It carries out the reaction L-methionyl-[protein] + a quinone + H2O = L-methionyl-(S)-S-oxide-[protein] + a quinol. The enzyme catalyses L-methionyl-[protein] + a quinone + H2O = L-methionyl-(R)-S-oxide-[protein] + a quinol. In terms of biological role, part of the MsrPQ system that repairs oxidized periplasmic proteins containing methionine sulfoxide residues (Met-O), using respiratory chain electrons. Thus protects these proteins from oxidative-stress damage caused by reactive species of oxygen and chlorine generated by the host defense mechanisms. MsrPQ is essential for the maintenance of envelope integrity under bleach stress, rescuing a wide series of structurally unrelated periplasmic proteins from methionine oxidation. The catalytic subunit MsrP is non-stereospecific, being able to reduce both (R-) and (S-) diastereoisomers of methionine sulfoxide. The sequence is that of Protein-methionine-sulfoxide reductase catalytic subunit MsrP from Ralstonia nicotianae (strain ATCC BAA-1114 / GMI1000) (Ralstonia solanacearum).